The following is a 941-amino-acid chain: UvrABC system protein A (941 aa).

31–38 (GLSGSGKS) contributes to the ATP binding site. A C4-type zinc finger spans residues 253–280 (CPICGYSMRELEPRLFSFNNPAGACPTC). 2 ABC transporter domains span residues 310–587 (WDRR…PESL) and 607–937 (ANPE…RFLK). Residue 640 to 647 (GVSGSGKS) participates in ATP binding. The C4-type zinc finger occupies 740 to 766 (CEACQGDGVIKVEMHFLPDIYVPCDQC).

It belongs to the ABC transporter superfamily. UvrA family. As to quaternary structure, forms a heterotetramer with UvrB during the search for lesions.

The protein resides in the cytoplasm. Functionally, the UvrABC repair system catalyzes the recognition and processing of DNA lesions. UvrA is an ATPase and a DNA-binding protein. A damage recognition complex composed of 2 UvrA and 2 UvrB subunits scans DNA for abnormalities. When the presence of a lesion has been verified by UvrB, the UvrA molecules dissociate. The chain is UvrABC system protein A from Salmonella typhi.